The following is a 450-amino-acid chain: Nuclear hormone receptor family member nhr-40 (450 aa).

A DNA-binding region (nuclear receptor) is located at residues 28 to 103 (GTLCVVCSDF…MGMDPKAIQH (76 aa)). NR C4-type zinc fingers lie at residues 31–51 (CVVC…CNGC) and 67–91 (CQFS…LKKC). The NR LBD domain occupies 173-450 (DVKAVIEDLL…LIDQLIIVGL (278 aa)).

The protein belongs to the nuclear hormone receptor family. Isoform b: Expressed in body wall muscle cells, pharyngeal muscles, rectal gland cells, vulval and uterine muscles and neurons in the head and ventral nerve cord. Isoform c: Expressed in body wall muscle cells, neurons in the head, nerve ring, ventral and dorsal nerve cords and epidermal cells in the tail.

The protein resides in the nucleus. Functionally, orphan nuclear receptor. Plays a role in morphogenesis and elongation during embryonic and larval development. Plays a role in muscle formation and motility. The protein is Nuclear hormone receptor family member nhr-40 of Caenorhabditis elegans.